A 250-amino-acid polypeptide reads, in one-letter code: 2,3-bisphosphoglycerate-dependent phosphoglycerate mutase (250 aa).

Residues 10–17 (RHGESQWN), 23–24 (TG), Arg62, 89–92 (ERHY), Lys100, 116–117 (RR), and 185–186 (GN) each bind substrate. The active-site Tele-phosphohistidine intermediate is His11. Residue Glu89 is the Proton donor/acceptor of the active site.

It belongs to the phosphoglycerate mutase family. BPG-dependent PGAM subfamily. As to quaternary structure, homodimer.

It catalyses the reaction (2R)-2-phosphoglycerate = (2R)-3-phosphoglycerate. Its pathway is carbohydrate degradation; glycolysis; pyruvate from D-glyceraldehyde 3-phosphate: step 3/5. Catalyzes the interconversion of 2-phosphoglycerate and 3-phosphoglycerate. The protein is 2,3-bisphosphoglycerate-dependent phosphoglycerate mutase of Erwinia tasmaniensis (strain DSM 17950 / CFBP 7177 / CIP 109463 / NCPPB 4357 / Et1/99).